We begin with the raw amino-acid sequence, 887 residues long: MMKNNLVSNLRKSFIDFFAKNGHQVFPSSPLILKDDPSLLFTNAGMVQFKQMFTNPNNANVNTATSSQKCLRVGGKHNDLENVGYTNRHHTFFEMLGNFSFGSYFKEGAIEFAWNFVIKELSLSKDRLYFTVYHDDQEAFDLWKKISGVSDSRIIKITTSDNFWSMGNTGPCGPCSEIFYDYGDNVKGGLPGTPEEDGARFTEIWNLVFMQYDRKLDGELCVLPKKCIDTGMGLERIAAVMQGVHDNYDISLFKALIAASKEQSGNSTNELAHRVIADHVRSAAFLIAEGLTPGNEGRNYILRRIIRRAARYVYMLKYDDALMYKVFPTLIDEESCGYMADYYPELIHAKDLIMSILKIEEENFKDTLVRALPLLEKELMNLSSGDILSGDIVFKLYDTYGFPVDITLDIIKEKGVKFDEQGFYDNMNKQKERSKLNHSIKSDQQLKEEFWVDIKERCGSTKFVGYERYDTKATVLSIVCGGDKNVEIANVGDKVSILLDITPFYAESGGQKGDVGIFNVIVRQEKELFANDNIAEVIDTKKVLDTLYIHECIIKQGSLMVGDVIFAKIDCERRRNLCANHSATHLLHYVLKSEIDSSIMQKGSLVSDEKLRFDFSYGVALTKEQLTLIEDKMYSLISGNNPVISHVCDLKDAVAGGAVALFTEKYEEHGVRVVSIKDSKELCCGTHVKYTSEIGCFKIVSEASIACGIRRIEAVTGRYAIDYFRQQEKMLNSIAESVKVPVDNVLVQIDKLDKKNQELEQKLSDVYFDMINLQGVNTEKIGNVDFLYSNLSNIPVNVMRKFINKHLTADRIILFANVVGQNVVCVVGVGNSLHCKVKAVDFVKMIGTMVKSKGGGNAQLAQINGEYVKEIDIMSNVKSKLVDILSN.

The Zn(2+) site is built by histidine 581, histidine 585, cysteine 683, and histidine 687.

This sequence belongs to the class-II aminoacyl-tRNA synthetase family. Zn(2+) serves as cofactor.

The protein resides in the cytoplasm. The enzyme catalyses tRNA(Ala) + L-alanine + ATP = L-alanyl-tRNA(Ala) + AMP + diphosphate. Its function is as follows. Catalyzes the attachment of alanine to tRNA(Ala) in a two-step reaction: alanine is first activated by ATP to form Ala-AMP and then transferred to the acceptor end of tRNA(Ala). Also edits incorrectly charged Ser-tRNA(Ala) and Gly-tRNA(Ala) via its editing domain. This chain is Alanine--tRNA ligase, found in Ehrlichia chaffeensis (strain ATCC CRL-10679 / Arkansas).